Consider the following 141-residue polypeptide: Large ribosomal subunit protein uL16 (141 aa).

A disordered region spans residues 1 to 20; it reads MLMPKRTKYRKQQKGRNRGK.

It belongs to the universal ribosomal protein uL16 family. Part of the 50S ribosomal subunit.

Functionally, binds 23S rRNA and is also seen to make contacts with the A and possibly P site tRNAs. This is Large ribosomal subunit protein uL16 from Nautilia profundicola (strain ATCC BAA-1463 / DSM 18972 / AmH).